A 303-amino-acid chain; its full sequence is UDP-N-acetylenolpyruvoylglucosamine reductase (303 aa).

An FAD-binding PCMH-type domain is found at 30–195 (KTGGPADLLA…LSARFEMAKG (166 aa)). Arg174 is an active-site residue. The active-site Proton donor is Ser224. Residue Glu294 is part of the active site.

It belongs to the MurB family. Requires FAD as cofactor.

The protein resides in the cytoplasm. It catalyses the reaction UDP-N-acetyl-alpha-D-muramate + NADP(+) = UDP-N-acetyl-3-O-(1-carboxyvinyl)-alpha-D-glucosamine + NADPH + H(+). It functions in the pathway cell wall biogenesis; peptidoglycan biosynthesis. Functionally, cell wall formation. This Latilactobacillus sakei subsp. sakei (strain 23K) (Lactobacillus sakei subsp. sakei) protein is UDP-N-acetylenolpyruvoylglucosamine reductase.